Consider the following 117-residue polypeptide: Large ribosomal subunit protein bL20 (117 aa).

Belongs to the bacterial ribosomal protein bL20 family.

Its function is as follows. Binds directly to 23S ribosomal RNA and is necessary for the in vitro assembly process of the 50S ribosomal subunit. It is not involved in the protein synthesizing functions of that subunit. The chain is Large ribosomal subunit protein bL20 from Solidesulfovibrio magneticus (strain ATCC 700980 / DSM 13731 / RS-1) (Desulfovibrio magneticus).